The following is a 557-amino-acid chain: NADP-dependent malic enzyme (557 aa).

Tyrosine 88 serves as the catalytic Proton donor. Arginine 141 contributes to the NADP(+) binding site. The active-site Proton acceptor is the lysine 159. Residues glutamate 231, aspartate 232, and aspartate 255 each coordinate a divalent metal cation. Position 255 (aspartate 255) interacts with NADP(+). Serine 322 is modified (phosphoserine). Asparagine 394 contacts NADP(+).

Belongs to the malic enzymes family. As to quaternary structure, homotetramer. Mg(2+) is required as a cofactor. Mn(2+) serves as cofactor.

The protein resides in the cytoplasm. The enzyme catalyses (S)-malate + NADP(+) = pyruvate + CO2 + NADPH. It carries out the reaction oxaloacetate + H(+) = pyruvate + CO2. In terms of biological role, catalyzes the oxidative decarboxylation of (S)-malate in the presence of NADP(+) and divalent metal ions, and decarboxylation of oxaloacetate. The sequence is that of NADP-dependent malic enzyme (ME1) from Sus scrofa (Pig).